The sequence spans 254 residues: Pyruvate aldolase (254 aa).

His-48 acts as the Proton acceptor in catalysis. A divalent metal cation-binding residues include Glu-151 and Asp-177.

This sequence belongs to the HpcH/HpaI aldolase family. A divalent metal cation is required as a cofactor.

The catalysed reaction is D-glyceraldehyde + pyruvate = 2-dehydro-3-deoxy-L-galactonate. Aldolase which can catalyze in vitro the aldolisation reaction between pyruvate (PA) and D-glyceraldehyde (D-GA) to form 2-dehydro-3-deoxy-L-galactonate. In Rhizobium etli (strain ATCC 51251 / DSM 11541 / JCM 21823 / NBRC 15573 / CFN 42), this protein is Pyruvate aldolase.